A 262-amino-acid chain; its full sequence is Probable carboxylesterase Culp3 (262 aa).

The N-terminal stretch at 1–41 (MNNRPIRLLTSGRAGLGAGALITAVVLLIALGAVWTPVAFA) is a signal peptide. Cys44 and Cys114 are disulfide-bonded. The active-site Nucleophile is the Ser125. An intrachain disulfide couples Cys188 to Cys195. The active site involves Asp192. Residue His206 is the Proton donor/acceptor of the active site. A disordered region spans residues 241–262 (LPGSVLQMPGTAAPAPESLHGR).

It belongs to the cutinase family.

It is found in the secreted. Its function is as follows. Shows weak esterase activity with the p-nitrophenol-linked aliphatic ester pNP-butyrate. Does not exhibit cutinase activity. The sequence is that of Probable carboxylesterase Culp3 (cut3) from Mycobacterium tuberculosis (strain ATCC 25618 / H37Rv).